The sequence spans 380 residues: 1-deoxy-D-xylulose 5-phosphate reductoisomerase 2 (380 aa).

Residues Ser-10, Gly-11, Ser-12, Ile-13, Gly-36, Lys-37, Asn-38, and Asn-120 each coordinate NADPH. Lys-121 lines the 1-deoxy-D-xylulose 5-phosphate pocket. Residue Glu-122 participates in NADPH binding. A Mn(2+)-binding site is contributed by Asp-146. 1-deoxy-D-xylulose 5-phosphate-binding residues include Ser-147, Glu-148, Ser-172, and His-195. A Mn(2+)-binding site is contributed by Glu-148. Gly-201 contributes to the NADPH binding site. 1-deoxy-D-xylulose 5-phosphate is bound by residues Ser-208, Asn-213, Lys-214, and Glu-217. Glu-217 contacts Mn(2+).

This sequence belongs to the DXR family. Mg(2+) serves as cofactor. Mn(2+) is required as a cofactor.

The catalysed reaction is 2-C-methyl-D-erythritol 4-phosphate + NADP(+) = 1-deoxy-D-xylulose 5-phosphate + NADPH + H(+). Its pathway is isoprenoid biosynthesis; isopentenyl diphosphate biosynthesis via DXP pathway; isopentenyl diphosphate from 1-deoxy-D-xylulose 5-phosphate: step 1/6. Its function is as follows. Catalyzes the NADPH-dependent rearrangement and reduction of 1-deoxy-D-xylulose-5-phosphate (DXP) to 2-C-methyl-D-erythritol 4-phosphate (MEP). The sequence is that of 1-deoxy-D-xylulose 5-phosphate reductoisomerase 2 from Bacillus thuringiensis subsp. konkukian (strain 97-27).